The following is a 197-amino-acid chain: GTP cyclohydrolase-2 (197 aa).

50 to 54 (RIHSE) is a binding site for GTP. Residues C55, C66, and C68 each coordinate Zn(2+). GTP contacts are provided by residues Q71, 93–95 (EGR), and T115. Catalysis depends on D127, which acts as the Proton acceptor. R129 functions as the Nucleophile in the catalytic mechanism. Positions 150 and 155 each coordinate GTP.

The protein belongs to the GTP cyclohydrolase II family. It depends on Zn(2+) as a cofactor.

It catalyses the reaction GTP + 4 H2O = 2,5-diamino-6-hydroxy-4-(5-phosphoribosylamino)-pyrimidine + formate + 2 phosphate + 3 H(+). Its pathway is cofactor biosynthesis; riboflavin biosynthesis; 5-amino-6-(D-ribitylamino)uracil from GTP: step 1/4. In terms of biological role, catalyzes the conversion of GTP to 2,5-diamino-6-ribosylamino-4(3H)-pyrimidinone 5'-phosphate (DARP), formate and pyrophosphate. In Aeromonas hydrophila subsp. hydrophila (strain ATCC 7966 / DSM 30187 / BCRC 13018 / CCUG 14551 / JCM 1027 / KCTC 2358 / NCIMB 9240 / NCTC 8049), this protein is GTP cyclohydrolase-2.